A 3387-amino-acid chain; its full sequence is Genome polyprotein (3387 aa).

Residues 1-100 (MNQRKKVVRP…LNILNGRKRS (100 aa)) are Cytoplasmic-facing. The hydrophobic; homodimerization of capsid protein C stretch occupies residues 36-71 (LFSGKGPLRMVLAFITFLRVLSIPPTAGILKRWGQL). The propeptide at 100-113 (STMTLLCLIPTAMA) is ER anchor for the capsid protein C, removed in mature form by serine protease NS3. The chain crosses the membrane as a helical span at residues 101–117 (TMTLLCLIPTAMAFHLS). Residues 118 to 237 (TRDGEPLMIV…GAWKHAQRVE (120 aa)) lie on the Extracellular side of the membrane. N182 carries an N-linked (GlcNAc...) asparagine; by host glycan. A helical membrane pass occupies residues 238–258 (SWILRNPGFALLAGFMAYMIG). At 259-265 (QTGIQRT) the chain is on the cytoplasmic side. A helical transmembrane segment spans residues 266 to 279 (VFFVLMMLVAPSYG). Residues 280 to 723 (MRCVGVGNRD…AVHQVFGSVY (444 aa)) are Extracellular-facing. Disulfide bonds link C282/C309, C339/C400, C353/C384, C371/C395, C464/C564, and C581/C612. N346 carries an N-linked (GlcNAc...) asparagine; by host glycan. The interval 377–390 (DRGWGNGCGLFGKG) is fusion peptide. A helical membrane pass occupies residues 724–746 (TTMFGGVSWMVRILIGFLVLWIG). At 747 to 750 (TNSR) the chain is on the cytoplasmic side. A helical transmembrane segment spans residues 751–771 (NTSMAMTCIAVGGITLFLGFT). Over 772-1194 (VHADTGCAVS…MLGDTMSGRM (423 aa)) the chain is Extracellular. Intrachain disulfides connect C778–C789, C829–C917, C953–C997, C1054–C1103, C1065–C1087, and C1086–C1090. N-linked (GlcNAc...) asparagine; by host glycans are attached at residues N904 and N981. A helical transmembrane segment spans residues 1195–1218 (GGQIHLAIMAVFKMSPGYVLGIFL). Residues 1219–1224 (RKLTSR) are Lumenal-facing. Residues 1225 to 1243 (ETALMVIGMAMTTVLSIPH) traverse the membrane as a helical segment. Residues 1244–1267 (DLMEFIDGISLGLILLKMVTHFDN) lie on the Cytoplasmic side of the membrane. A helical transmembrane segment spans residues 1268 to 1288 (TQVGTLALSLTFIRSTMPLVM). Position 1289 (A1289) is a topological domain, lumenal. A helical transmembrane segment spans residues 1290–1308 (WRTIMAVLFVVTLIPLCRT). Topologically, residues 1309 to 1316 (SCLQKQSH) are lumenal. Residues 1317–1337 (WVEITALILGAQALPVYLMTL) traverse the membrane as a helical segment. Over 1338-1345 (MKGASKRS) the chain is Cytoplasmic. A helical membrane pass occupies residues 1346–1366 (WPLNEGIMAVGLVSLLGSALL). Over 1367-1369 (KND) the chain is Lumenal. Residues 1370 to 1390 (VPLAGPMVAGGLLLAAYVMSG) traverse the membrane as a helical segment. Topologically, residues 1391 to 1437 (SSADLSLEKAANVQWDEMADITGSSPIIEVKQDEDGSFSIRDIEETN) are cytoplasmic. Positions 1397 to 1436 (LEKAANVQWDEMADITGSSPIIEVKQDEDGSFSIRDIEET) are interacts with and activates NS3 protease. An intramembrane region (helical) is located at residues 1438–1458 (MITLLVKLALITVSGLYPLAI). At 1459-2146 (PVTMTLWYMW…LNELPESLET (688 aa)) the chain is on the cytoplasmic side. In terms of domain architecture, Peptidase S7 spans 1475 to 1652 (SGALWDVPSP…ERTGEPDYEV (178 aa)). Active-site charge relay system; for serine protease NS3 activity residues include H1525, D1549, and S1609. The Helicase ATP-binding domain maps to 1654–1810 (EDIFRKKRLT…QSNSPIEDIE (157 aa)). Residues 1658-1661 (RKKR) are important for RNA-binding. 1667-1674 (LHPGAGKT) serves as a coordination point for ATP. The DEAH box motif lies at 1758-1761 (DEAH). Residues 1820–1987 (TGFDWITDYQ…IIPTLFGPER (168 aa)) form the Helicase C-terminal domain. K1862 carries the N6-acetyllysine; by host modification. The helical transmembrane segment at 2147–2167 (LMLVALLGAMTAGIFLFFMQG) threads the bilayer. The Lumenal segment spans residues 2168 to 2169 (KG). The segment at residues 2170–2190 (IGKLSMGLIAIAVASGLLWVA) is an intramembrane region (helical). Position 2191 (E2191) is a topological domain, lumenal. A helical membrane pass occupies residues 2192 to 2212 (IQPQWIAASIILEFFLMVLLI). Residues 2213–2225 (PEPEKQRTPQDNQ) are Cytoplasmic-facing. Residues 2226–2246 (LIYVILTILTIIGLIAANEMG) form a helical membrane-spanning segment. Residues 2247–2270 (LIEKTKTDFGFYQVKTETTILDVD) lie on the Lumenal side of the membrane. An intramembrane region (helical) is located at residues 2271-2291 (LRPASAWTLYAVATTILTPML). The Lumenal portion of the chain corresponds to 2292–2301 (RHTIENTSAN). N-linked (GlcNAc...) asparagine; by host glycans are attached at residues N2297 and N2301. The helical intramembrane region spans 2302–2322 (LSLAAIANQAAVLMGLGKGWP). Over 2323–2343 (LHRMDLGVPLLAMGCYSQVNP) the chain is Lumenal. Residues 2344–2364 (TTLIASLVMLLVHYAIIGPGL) form a helical membrane-spanning segment. The Cytoplasmic portion of the chain corresponds to 2365–2409 (QAKATREAQKRTAAGIMKNPTVDGITVIDLEPISYDPKFEKQLGQ). A helical transmembrane segment spans residues 2410–2430 (VMLLVLCAGQLLLMRTTWAFC). Topologically, residues 2431–2455 (EVLTLATGPVLTLWEGNPGRFWNTT) are lumenal. N2453 carries an N-linked (GlcNAc...) asparagine; by host glycan. Residues 2456-2476 (IAVSTANIFRGSYLAGAGLAF) form a helical membrane-spanning segment. Over 2477–3387 (SLIKNAQTPR…SAPFESEGVL (911 aa)) the chain is Cytoplasmic. The region spanning 2489 to 2751 (TGTTGETLGE…DVDLGAGTRS (263 aa)) is the mRNA cap 0-1 NS5-type MT domain. An S-adenosyl-L-methionine-binding site is contributed by S2543. Residue S2543 is modified to Phosphoserine. K2548 functions as the For 2'-O-MTase activity in the catalytic mechanism. The SUMO-interacting motif motif lies at 2564 to 2567 (VVDL). Residues G2573, W2574, T2591, K2592, D2618, and V2619 each coordinate S-adenosyl-L-methionine. D2633 serves as the catalytic For 2'-O-MTase activity. I2634 serves as a coordination point for S-adenosyl-L-methionine. Active-site for 2'-O-MTase activity residues include K2668 and E2704. Y2706 lines the S-adenosyl-L-methionine pocket. Residues E2925, H2929, C2934, and C2937 each contribute to the Zn(2+) site. Positions 3016–3166 (LIYADDTAGW…PLDERFSTSL (151 aa)) constitute a RdRp catalytic domain. H3200, C3216, and C3335 together coordinate Zn(2+).

The protein in the N-terminal section; belongs to the class I-like SAM-binding methyltransferase superfamily. mRNA cap 0-1 NS5-type methyltransferase family. In terms of assembly, homodimer. Interacts (via N-terminus) with host EXOC1 (via C-terminus); this interaction results in EXOC1 degradation through the proteasome degradation pathway. Forms heterodimers with envelope protein E in the endoplasmic reticulum and Golgi. As to quaternary structure, homodimer; in the endoplasmic reticulum and Golgi. Interacts with protein prM. Interacts with non-structural protein 1. In terms of assembly, homodimer; Homohexamer when secreted. Interacts with envelope protein E. Interacts (via N-terminus) with serine protease NS3. As to quaternary structure, forms a heterodimer with serine protease NS3. May form homooligomers. In terms of assembly, forms a heterodimer with NS2B. Interacts with NS4B. Interacts with unphosphorylated RNA-directed RNA polymerase NS5; this interaction stimulates RNA-directed RNA polymerase NS5 guanylyltransferase activity. Interacts with host MAVS; this interaction inhibits the synthesis of IFN-beta. Interacts with host AUP1; the interaction occurs in the presence of Dengue virus NS4B and induces lipophagy which facilitates production of virus progeny particles. As to quaternary structure, interacts with serine protease NS3. In terms of assembly, homodimer. Interacts with host STAT2; this interaction inhibits the phosphorylation of the latter, and, when all viral proteins are present (polyprotein), targets STAT2 for degradation. Interacts with serine protease NS3. Interacts with host PAF1 complex; the interaction may prevent the recruitment of the PAF1 complex to interferon-responsive genes, and thus reduces the immune response. In terms of processing, specific enzymatic cleavages in vivo yield mature proteins. Cleavages in the lumen of endoplasmic reticulum are performed by host signal peptidase, whereas cleavages in the cytoplasmic side are performed by serine protease NS3. Signal cleavage at the 2K-4B site requires a prior NS3 protease-mediated cleavage at the 4A-2K site. Cleaved in post-Golgi vesicles by a host furin, releasing the mature small envelope protein M, and peptide pr. This cleavage is incomplete as up to 30% of viral particles still carry uncleaved prM. Post-translationally, N-glycosylated. In terms of processing, N-glycosylated. The excreted form is glycosylated and this is required for efficient secretion of the protein from infected cells. Acetylated by host KAT5. Acetylation modulates NS3 RNA-binding and unwinding activities and plays an important positive role for viral replication. Post-translationally, sumoylation of RNA-directed RNA polymerase NS5 increases NS5 protein stability allowing proper viral RNA replication. In terms of processing, phosphorylated on serines residues. This phosphorylation may trigger NS5 nuclear localization.

It localises to the virion. It is found in the host nucleus. The protein resides in the host cytoplasm. Its subcellular location is the host perinuclear region. The protein localises to the secreted. It localises to the virion membrane. It is found in the host endoplasmic reticulum membrane. The protein resides in the host mitochondrion. It catalyses the reaction Selective hydrolysis of -Xaa-Xaa-|-Yaa- bonds in which each of the Xaa can be either Arg or Lys and Yaa can be either Ser or Ala.. The enzyme catalyses RNA(n) + a ribonucleoside 5'-triphosphate = RNA(n+1) + diphosphate. It carries out the reaction a ribonucleoside 5'-triphosphate + H2O = a ribonucleoside 5'-diphosphate + phosphate + H(+). The catalysed reaction is ATP + H2O = ADP + phosphate + H(+). It catalyses the reaction a 5'-end (5'-triphosphoguanosine)-ribonucleoside in mRNA + S-adenosyl-L-methionine = a 5'-end (N(7)-methyl 5'-triphosphoguanosine)-ribonucleoside in mRNA + S-adenosyl-L-homocysteine. The enzyme catalyses a 5'-end (N(7)-methyl 5'-triphosphoguanosine)-ribonucleoside in mRNA + S-adenosyl-L-methionine = a 5'-end (N(7)-methyl 5'-triphosphoguanosine)-(2'-O-methyl-ribonucleoside) in mRNA + S-adenosyl-L-homocysteine + H(+). Functionally, plays a role in virus budding by binding to the cell membrane and gathering the viral RNA into a nucleocapsid that forms the core of a mature virus particle. During virus entry, may induce genome penetration into the host cytoplasm after hemifusion induced by the surface proteins. Can migrate to the cell nucleus where it modulates host functions. Overcomes the anti-viral effects of host EXOC1 by sequestering and degrading the latter through the proteasome degradation pathway. Inhibits RNA silencing by interfering with host Dicer. Its function is as follows. Prevents premature fusion activity of envelope proteins in trans-Golgi by binding to envelope protein E at pH6.0. After virion release in extracellular space, gets dissociated from E dimers. In terms of biological role, acts as a chaperone for envelope protein E during intracellular virion assembly by masking and inactivating envelope protein E fusion peptide. prM is the only viral peptide matured by host furin in the trans-Golgi network probably to avoid catastrophic activation of the viral fusion activity in acidic Golgi compartment prior to virion release. prM-E cleavage is inefficient, and many virions are only partially matured. These uncleaved prM would play a role in immune evasion. Functionally, may play a role in virus budding. Exerts cytotoxic effects by activating a mitochondrial apoptotic pathway through M ectodomain. May display a viroporin activity. Binds to host cell surface receptor and mediates fusion between viral and cellular membranes. Envelope protein is synthesized in the endoplasmic reticulum in the form of heterodimer with protein prM. They play a role in virion budding in the ER, and the newly formed immature particle is covered with 60 spikes composed of heterodimer between precursor prM and envelope protein E. The virion is transported to the Golgi apparatus where the low pH causes dissociation of PrM-E heterodimers and formation of E homodimers. prM-E cleavage is inefficient, and many virions are only partially matured. These uncleaved prM would play a role in immune evasion. Its function is as follows. Involved in immune evasion, pathogenesis and viral replication. Once cleaved off the polyprotein, is targeted to three destinations: the viral replication cycle, the plasma membrane and the extracellular compartment. Essential for viral replication. Required for formation of the replication complex and recruitment of other non-structural proteins to the ER-derived membrane structures. Excreted as a hexameric lipoparticle that plays a role against host immune response. Antagonizing the complement function. Binds to the host macrophages and dendritic cells. Inhibits signal transduction originating from Toll-like receptor 3 (TLR3). In terms of biological role, disrupts the host endothelial glycocalyx layer of host pulmonary microvascular endothelial cells, inducing degradation of sialic acid and shedding of heparan sulfate proteoglycans. NS1 induces expression of sialidases, heparanase, and activates cathepsin L, which activates heparanase via enzymatic cleavage. These effects are probably linked to the endothelial hyperpermeability observed in severe dengue disease. Functionally, component of the viral RNA replication complex that functions in virion assembly and antagonizes the host immune response. Required cofactor for the serine protease function of NS3. May have membrane-destabilizing activity and form viroporins. Its function is as follows. Displays three enzymatic activities: serine protease, NTPase and RNA helicase. NS3 serine protease, in association with NS2B, performs its autocleavage and cleaves the polyprotein at dibasic sites in the cytoplasm: C-prM, NS2A-NS2B, NS2B-NS3, NS3-NS4A, NS4A-2K and NS4B-NS5. NS3 RNA helicase binds RNA and unwinds dsRNA in the 3' to 5' direction. In terms of biological role, regulates the ATPase activity of the NS3 helicase activity. NS4A allows NS3 helicase to conserve energy during unwinding. Plays a role in the inhibition of the host innate immune response. Interacts with host MAVS and thereby prevents the interaction between RIGI and MAVS. In turn, IFN-beta production is impaired. Interacts with host AUP1 which mediates induction of lipophagy in host cells and facilitates production of virus progeny particles. Functionally, functions as a signal peptide for NS4B and is required for the interferon antagonism activity of the latter. Induces the formation of ER-derived membrane vesicles where the viral replication takes place. Inhibits interferon (IFN)-induced host STAT1 phosphorylation and nuclear translocation, thereby preventing the establishment of cellular antiviral state by blocking the IFN-alpha/beta pathway. Its function is as follows. Replicates the viral (+) and (-) RNA genome, and performs the capping of genomes in the cytoplasm. NS5 methylates viral RNA cap at guanine N-7 and ribose 2'-O positions. Besides its role in RNA genome replication, also prevents the establishment of cellular antiviral state by blocking the interferon-alpha/beta (IFN-alpha/beta) signaling pathway. Inhibits host TYK2 and STAT2 phosphorylation, thereby preventing activation of JAK-STAT signaling pathway. May reduce immune responses by preventing the recruitment of the host PAF1 complex to interferon-responsive genes. This Aedes aegypti (Yellowfever mosquito) protein is Genome polyprotein.